A 227-amino-acid polypeptide reads, in one-letter code: Cytidylate kinase (227 aa).

12–20 (GPSGAGKGT) provides a ligand contact to ATP.

The protein belongs to the cytidylate kinase family. Type 1 subfamily.

Its subcellular location is the cytoplasm. It catalyses the reaction CMP + ATP = CDP + ADP. It carries out the reaction dCMP + ATP = dCDP + ADP. The sequence is that of Cytidylate kinase from Salmonella choleraesuis (strain SC-B67).